A 130-amino-acid polypeptide reads, in one-letter code: Small ribosomal subunit protein uS4 (130 aa).

At K64 the chain carries N6-acetyllysine. Residue K91 forms a Glycyl lysine isopeptide (Lys-Gly) (interchain with G-Cter in SUMO2) linkage. Residues 106–130 (RRLQTQVFKLGLAXSIHHXRVLIRQ) enclose the S4 RNA-binding domain. K114 bears the N6-acetyllysine mark.

Belongs to the universal ribosomal protein uS4 family. As to quaternary structure, component of the small ribosomal subunit. Identified in a IGF2BP1-dependent mRNP granule complex containing untranslated mRNAs. Part of the small subunit (SSU) processome, composed of more than 70 proteins and the RNA chaperone small nucleolar RNA (snoRNA) U3.

The protein resides in the cytoplasm. Its subcellular location is the nucleus. It is found in the nucleolus. Component of the small ribosomal subunit. The ribosome is a large ribonucleoprotein complex responsible for the synthesis of proteins in the cell. Part of the small subunit (SSU) processome, first precursor of the small eukaryotic ribosomal subunit. During the assembly of the SSU processome in the nucleolus, many ribosome biogenesis factors, an RNA chaperone and ribosomal proteins associate with the nascent pre-rRNA and work in concert to generate RNA folding, modifications, rearrangements and cleavage as well as targeted degradation of pre-ribosomal RNA by the RNA exosome. This is Small ribosomal subunit protein uS4 (RPS9) from Sus scrofa (Pig).